The sequence spans 76 residues: Omega-conotoxin-like TxMKLT1-0141 (76 aa).

The first 22 residues, 1–22 (MKLTCMMIVAVLFLTAWTFATA), serve as a signal peptide directing secretion. Residues 23 to 50 (DDSSNGLENLFPKAHHEMKNPEASKLNE) constitute a propeptide that is removed on maturation. 3 cysteine pairs are disulfide-bonded: Cys-52-Cys-67, Cys-59-Cys-70, and Cys-66-Cys-75.

The protein belongs to the conotoxin O1 superfamily. Expressed by the venom duct.

It is found in the secreted. In terms of biological role, omega-conotoxins act at presynaptic membranes, they bind and block voltage-gated calcium channels (Cav). This chain is Omega-conotoxin-like TxMKLT1-0141, found in Conus textile (Cloth-of-gold cone).